Reading from the N-terminus, the 199-residue chain is Probable GTP-binding protein EngB (199 aa).

In terms of domain architecture, EngB-type G spans 21–196 (TKPEYAFIGR…LTYIDEINKQ (176 aa)). Residues 29-36 (GRSNVGKS), 56-60 (GKTQL), 74-77 (DLPG), 141-144 (TKID), and 175-177 (TSS) each bind GTP. Residues Ser36 and Thr58 each coordinate Mg(2+).

Belongs to the TRAFAC class TrmE-Era-EngA-EngB-Septin-like GTPase superfamily. EngB GTPase family. Requires Mg(2+) as cofactor.

Functionally, necessary for normal cell division and for the maintenance of normal septation. This is Probable GTP-binding protein EngB from Cytophaga hutchinsonii (strain ATCC 33406 / DSM 1761 / CIP 103989 / NBRC 15051 / NCIMB 9469 / D465).